We begin with the raw amino-acid sequence, 541 residues long: Chaperonin GroEL 2 (541 aa).

ATP contacts are provided by residues 30–33, Lys51, 87–91, Gly415, and Asp496; these read TLGP and DGTTT.

It belongs to the chaperonin (HSP60) family. In terms of assembly, forms a cylinder of 14 subunits composed of two heptameric rings stacked back-to-back. Interacts with the co-chaperonin GroES.

The protein resides in the cytoplasm. It carries out the reaction ATP + H2O + a folded polypeptide = ADP + phosphate + an unfolded polypeptide.. Its function is as follows. Together with its co-chaperonin GroES, plays an essential role in assisting protein folding. The GroEL-GroES system forms a nano-cage that allows encapsulation of the non-native substrate proteins and provides a physical environment optimized to promote and accelerate protein folding. This chain is Chaperonin GroEL 2, found in Gluconacetobacter diazotrophicus (strain ATCC 49037 / DSM 5601 / CCUG 37298 / CIP 103539 / LMG 7603 / PAl5).